Reading from the N-terminus, the 365-residue chain is Aminomethyltransferase (365 aa).

The protein belongs to the GcvT family. The glycine cleavage system is composed of four proteins: P, T, L and H.

It carries out the reaction N(6)-[(R)-S(8)-aminomethyldihydrolipoyl]-L-lysyl-[protein] + (6S)-5,6,7,8-tetrahydrofolate = N(6)-[(R)-dihydrolipoyl]-L-lysyl-[protein] + (6R)-5,10-methylene-5,6,7,8-tetrahydrofolate + NH4(+). Functionally, the glycine cleavage system catalyzes the degradation of glycine. This Desulfitobacterium hafniense (strain DSM 10664 / DCB-2) protein is Aminomethyltransferase.